The chain runs to 198 residues: Ion-translocating oxidoreductase complex subunit B (198 aa).

The segment at 1–26 (MTTIMIAVLAIALLATLFGAILGFAS) is hydrophobic. Residues 32–90 (EADPIVDQIDAILPQTQCGQCGYPGCRPYAEAIANGDSINKCPPGGQATIEKLADLMGV) form the 4Fe-4S domain. The [4Fe-4S] cluster site is built by Cys-49, Cys-52, Cys-57, Cys-73, Cys-114, Cys-117, Cys-120, Cys-124, Cys-144, Cys-147, Cys-150, and Cys-154. 2 4Fe-4S ferredoxin-type domains span residues 105 to 134 (KVAF…GGTK) and 135 to 164 (ALHT…MIPL).

Belongs to the 4Fe4S bacterial-type ferredoxin family. RnfB subfamily. As to quaternary structure, the complex is composed of six subunits: RnfA, RnfB, RnfC, RnfD, RnfE and RnfG. [4Fe-4S] cluster is required as a cofactor.

It localises to the cell inner membrane. In terms of biological role, part of a membrane-bound complex that couples electron transfer with translocation of ions across the membrane. The chain is Ion-translocating oxidoreductase complex subunit B from Vibrio vulnificus (strain CMCP6).